The following is a 398-amino-acid chain: Succinate--CoA ligase [ADP-forming] subunit beta (398 aa).

The 246-residue stretch at 9-254 folds into the ATP-grasp domain; that stretch reads KALLHEFGVP…ETEEDAKEIE (246 aa). ATP is bound by residues Lys-46, 53–55, Glu-109, Ser-112, and Glu-117; that span reads GRG. 2 residues coordinate Mg(2+): Asn-209 and Asp-223. Residues Asn-274 and 331 to 333 contribute to the substrate site; that span reads GIM.

Belongs to the succinate/malate CoA ligase beta subunit family. As to quaternary structure, heterotetramer of two alpha and two beta subunits. Mg(2+) serves as cofactor.

The catalysed reaction is succinate + ATP + CoA = succinyl-CoA + ADP + phosphate. It carries out the reaction GTP + succinate + CoA = succinyl-CoA + GDP + phosphate. It participates in carbohydrate metabolism; tricarboxylic acid cycle; succinate from succinyl-CoA (ligase route): step 1/1. Functionally, succinyl-CoA synthetase functions in the citric acid cycle (TCA), coupling the hydrolysis of succinyl-CoA to the synthesis of either ATP or GTP and thus represents the only step of substrate-level phosphorylation in the TCA. The beta subunit provides nucleotide specificity of the enzyme and binds the substrate succinate, while the binding sites for coenzyme A and phosphate are found in the alpha subunit. In Bradyrhizobium sp. (strain ORS 278), this protein is Succinate--CoA ligase [ADP-forming] subunit beta.